A 156-amino-acid polypeptide reads, in one-letter code: 6,7-dimethyl-8-ribityllumazine synthase (156 aa).

Residues F22, 57–59, and 81–83 each bind 5-amino-6-(D-ribitylamino)uracil; these read AVE and SVI. 86-87 provides a ligand contact to (2S)-2-hydroxy-3-oxobutyl phosphate; that stretch reads GT. H89 serves as the catalytic Proton donor. Residue F114 participates in 5-amino-6-(D-ribitylamino)uracil binding. R128 contacts (2S)-2-hydroxy-3-oxobutyl phosphate.

Belongs to the DMRL synthase family. In terms of assembly, forms an icosahedral capsid composed of 60 subunits, arranged as a dodecamer of pentamers.

The catalysed reaction is (2S)-2-hydroxy-3-oxobutyl phosphate + 5-amino-6-(D-ribitylamino)uracil = 6,7-dimethyl-8-(1-D-ribityl)lumazine + phosphate + 2 H2O + H(+). Its pathway is cofactor biosynthesis; riboflavin biosynthesis; riboflavin from 2-hydroxy-3-oxobutyl phosphate and 5-amino-6-(D-ribitylamino)uracil: step 1/2. Functionally, catalyzes the formation of 6,7-dimethyl-8-ribityllumazine by condensation of 5-amino-6-(D-ribitylamino)uracil with 3,4-dihydroxy-2-butanone 4-phosphate. This is the penultimate step in the biosynthesis of riboflavin. The protein is 6,7-dimethyl-8-ribityllumazine synthase of Aliivibrio fischeri (strain ATCC 700601 / ES114) (Vibrio fischeri).